We begin with the raw amino-acid sequence, 122 residues long: Large ribosomal subunit protein bL12 (122 aa).

It belongs to the bacterial ribosomal protein bL12 family. In terms of assembly, homodimer. Part of the ribosomal stalk of the 50S ribosomal subunit. Forms a multimeric L10(L12)X complex, where L10 forms an elongated spine to which 2 to 4 L12 dimers bind in a sequential fashion. Binds GTP-bound translation factors.

Its function is as follows. Forms part of the ribosomal stalk which helps the ribosome interact with GTP-bound translation factors. Is thus essential for accurate translation. This chain is Large ribosomal subunit protein bL12, found in Stutzerimonas stutzeri (strain A1501) (Pseudomonas stutzeri).